A 301-amino-acid chain; its full sequence is Probable aspartoacylase (301 aa).

Histidine 13 and glutamate 16 together coordinate Zn(2+). Substrate is bound by residues arginine 54 and 61 to 62; that span reads NR. Histidine 105 is a binding site for Zn(2+). Substrate-binding residues include glutamate 163 and tyrosine 273.

This sequence belongs to the AspA/AstE family. Aspartoacylase subfamily. The cofactor is Zn(2+).

It catalyses the reaction an N-acyl-L-aspartate + H2O = a carboxylate + L-aspartate. The sequence is that of Probable aspartoacylase from Prochlorococcus marinus (strain MIT 9215).